Reading from the N-terminus, the 120-residue chain is uncharacterized protein (120 aa).

The N-terminal stretch at 1–19 (MTSFAVVARLITRAPRVRA) is a signal peptide. 2 disordered regions span residues 48–71 (VAKK…DKAK) and 90–120 (DTVT…KNLK). Residues 90–103 (DTVTGKTEETKESI) are compositionally biased toward basic and acidic residues.

This is an uncharacterized protein from Arabidopsis thaliana (Mouse-ear cress).